Here is a 140-residue protein sequence, read N- to C-terminus: Ribosome maturation factor RimP (140 aa).

The protein belongs to the RimP family.

The protein localises to the cytoplasm. Its function is as follows. Required for maturation of 30S ribosomal subunits. This chain is Ribosome maturation factor RimP, found in Campylobacter jejuni subsp. jejuni serotype O:2 (strain ATCC 700819 / NCTC 11168).